Consider the following 653-residue polypeptide: Chaperone protein dnaK3 (653 aa).

The residue at position 197 (T197) is a Phosphothreonine; by autocatalysis.

This sequence belongs to the heat shock protein 70 family.

In terms of biological role, acts as a chaperone. The sequence is that of Chaperone protein dnaK3 (dnaK3) from Nostoc sp. (strain PCC 7120 / SAG 25.82 / UTEX 2576).